Reading from the N-terminus, the 1054-residue chain is Translation initiation factor IF-2 (1054 aa).

2 disordered regions span residues 48 to 390 (RSKL…LDLD) and 409 to 458 (LARP…GTEP). Pro residues predominate over residues 65-76 (KPPSESLPPEPP). A compositionally biased stretch (polar residues) spans 160–169 (SEATQKPETV). A compositionally biased stretch (low complexity) spans 179-193 (SESAAAKASGSEPSP). 2 stretches are compositionally biased toward pro residues: residues 221-235 (PQKA…PSEA) and 304-316 (PTRP…PPEP). The span at 365-378 (RAARVQAKRKRSRR) shows a compositional bias: basic residues. Low complexity predominate over residues 421–437 (PPAATAAPPARPRPAAR). Residues 545–718 (SRPPVVTIMG…LLVADVAELQ (174 aa)) form the tr-type G domain. Residues 554-561 (GHVDHGKT) form a G1 region. Residue 554-561 (GHVDHGKT) participates in GTP binding. Residues 579 to 583 (GITQR) are G2. Residues 604–607 (DTPG) form a G3 region. Residues 604 to 608 (DTPGH) and 658 to 661 (NKID) each bind GTP. The segment at 658 to 661 (NKID) is G4. A G5 region spans residues 694-696 (SAL).

It belongs to the TRAFAC class translation factor GTPase superfamily. Classic translation factor GTPase family. IF-2 subfamily.

It localises to the cytoplasm. One of the essential components for the initiation of protein synthesis. Protects formylmethionyl-tRNA from spontaneous hydrolysis and promotes its binding to the 30S ribosomal subunits. Also involved in the hydrolysis of GTP during the formation of the 70S ribosomal complex. This Synechococcus sp. (strain JA-2-3B'a(2-13)) (Cyanobacteria bacterium Yellowstone B-Prime) protein is Translation initiation factor IF-2.